A 234-amino-acid chain; its full sequence is Ras-related protein Rab-20 (234 aa).

GTP is bound by residues Gly-17, Lys-18, Thr-19, Asp-32, and Thr-36. Residue Thr-19 participates in Mg(2+) binding. 2 short sequence motifs (switch) span residues 28 to 41 (RRFPDTVSTVGGAF) and 55 to 72 (DTAGREQFHGLGSMYCRG). Residues Thr-36 and Asp-55 each contribute to the Mg(2+) site. The GTP site is built by Gly-58, Asn-113, Lys-114, and Asp-116. The disordered stretch occupies residues 125–144 (GQEKEECSPNMDAGDRVSPR). Positions 126-142 (QEKEECSPNMDAGDRVS) are enriched in basic and acidic residues. GTP is bound by residues Ala-184 and Lys-185. Positions 212–234 (RPSHTVDISSHKPPKRTRSGCCA) are disordered. Residues 223-234 (KPPKRTRSGCCA) are compositionally biased toward basic residues. S-geranylgeranyl cysteine attachment occurs at residues Cys-232 and Cys-233.

It belongs to the small GTPase superfamily. Rab family. Mg(2+) is required as a cofactor. In terms of tissue distribution, low or absent expression in normal pancreas and stronger expression in 15 of 18 exocrine pancreatic adenocarcinomas (at protein level).

Its subcellular location is the golgi apparatus. It is found in the cytoplasmic vesicle. It localises to the phagosome. The protein localises to the phagosome membrane. The enzyme catalyses GTP + H2O = GDP + phosphate + H(+). Its activity is regulated as follows. Regulated by guanine nucleotide exchange factors (GEFs) which promote the exchange of bound GDP for free GTP. Regulated by GTPase activating proteins (GAPs) which increase the GTP hydrolysis activity. Inhibited by GDP dissociation inhibitors (GDIs). The small GTPases Rab are key regulators of intracellular membrane trafficking, from the formation of transport vesicles to their fusion with membranes. Rabs cycle between an inactive GDP-bound form and an active GTP-bound form that is able to recruit to membranes different sets of downstream effectors directly responsible for vesicle formation, movement, tethering and fusion. RAB20 plays a role in apical endocytosis/recycling. Plays a role in the maturation and acidification of phagosomes that engulf pathogens, such as S.aureus and M.tuberculosis. Plays a role in the fusion of phagosomes with lysosomes. This Homo sapiens (Human) protein is Ras-related protein Rab-20.